The sequence spans 427 residues: MIDPKLLRGDLTDLQQQLATRGYTLDMAFWQSIENERKSLQVQTEELQSRRNAGAKQVGALKKSGEDTSELLADMQSVSGEIKTAEDELRTLQERINQAALQIPNIPAADVPVGASEDDNVEVRKWGTPREFDFEIKDHAHIGETLGMLDFEAAAKLTGSRFNVLKGQLAQMHRALIQFMLNTHTIKYGYTETYVPYIVNSESLKGTGQLPKFEGDLFKLINHTNNDDMDFYLIPTAEVPMTNLVRGERLDIKELPLKFTAHTPCFRSEAGSHGRDTRGLIRQHQFEKVEMVNIATAEQSDELLEAMTGQAEFILQQLNLPYRTVKLCTGDMGFAAQKTYDIEVWLPSQDTYREISSCSNCGDFQARRMGTRVKDGKQTSLVHTLNGSGLAVGRTLLAVMENYQNADGSITIPEVLRPFMGGADSIL.

Position 236–238 (236–238) interacts with L-serine; sequence TAE. Position 267 to 269 (267 to 269) interacts with ATP; sequence RSE. E290 lines the L-serine pocket. 354 to 357 serves as a coordination point for ATP; the sequence is EISS. Residue S388 coordinates L-serine.

It belongs to the class-II aminoacyl-tRNA synthetase family. Type-1 seryl-tRNA synthetase subfamily. As to quaternary structure, homodimer. The tRNA molecule binds across the dimer.

It is found in the cytoplasm. It catalyses the reaction tRNA(Ser) + L-serine + ATP = L-seryl-tRNA(Ser) + AMP + diphosphate + H(+). It carries out the reaction tRNA(Sec) + L-serine + ATP = L-seryl-tRNA(Sec) + AMP + diphosphate + H(+). It participates in aminoacyl-tRNA biosynthesis; selenocysteinyl-tRNA(Sec) biosynthesis; L-seryl-tRNA(Sec) from L-serine and tRNA(Sec): step 1/1. Functionally, catalyzes the attachment of serine to tRNA(Ser). Is also able to aminoacylate tRNA(Sec) with serine, to form the misacylated tRNA L-seryl-tRNA(Sec), which will be further converted into selenocysteinyl-tRNA(Sec). The sequence is that of Serine--tRNA ligase from Psychrobacter arcticus (strain DSM 17307 / VKM B-2377 / 273-4).